We begin with the raw amino-acid sequence, 416 residues long: MPNGSRCPDCGSSELVEDSHYSQSQLVCSDCGCVVTEGVLTTTFSDEGNLREVTYSRSTGENEQVSRSQQRDLRRVRDLCRILKLPLTFEETAVSYYQKAYQLSGIRAARLQKKEVVVGCCVLITCRQHNWPLTMGAICTLLYADLDVFSSTYMQIVKLLGLDVPSLCLADLVKSYCSSFKLFQASPSMPAKYVEDKDKMLSRTLLLVELANETWLVTGRHPLPIITAATFLAWQSLRPSDRLTCSLARFCKLANVDLPYPAASRLQELLAVLLQMASQLAWLQVLRLDKRSVVKHIGDLLQHRHMLVRMAFQDGTAEVETKQQQPQGRGQQEEVGDSTFDLPKRKRPASPALLLPPCMLKPPKRTHTMPPDSVVTGDEDISDSEIEQYLRTPQEVRDFERAQAASRAAMSVPNPP.

A TFIIB-type zinc finger spans residues 3–36 (NGSRCPDCGSSELVEDSHYSQSQLVCSDCGCVVT). Zn(2+) contacts are provided by C7, C10, C28, and C31. Tandem repeats lie at residues 72–157 (DLRR…MQIV) and 173–249 (VKSY…SLAR). Positions 108–114 (AARLQKK) are interaction with target DNA. Positions 317 to 385 (AEVETKQQQP…TGDEDISDSE (69 aa)) are disordered. Residue S350 is modified to Phosphoserine. The required for the formation of a ternary complex with DNA and TBP; not required for interaction with TBP in the absence of DNA stretch occupies residues 354–360 (LLPPCML). Residue C358 is modified to Cysteine sulfenic acid (-SOH). The tract at residues 362–416 (PPKRTHTMPPDSVVTGDEDISDSEIEQYLRTPQEVRDFERAQAASRAAMSVPNPP) is required for interaction with TBP and formation of a ternary complex with DNA and TBP.

This sequence belongs to the TFIIB family. As to quaternary structure, component of TFIIIB complexes. The TFIIIB complex has two activities, alpha and beta. The TFIIIB-alpha activity complex is composed of TBP, BDP1, and a complex containing both BRF2 and at least four stably associated proteins; this complex inhibits the transcription by pol III via its phosphorylation by CK2; YY1 facilitates the TFIIIB-alpha complex formation. Interacts with TBP; this interaction promotes recruitment of BRF2 to TATA box-containing promoters. Interacts with TBP and the BURE sequence (GC-rich sequence downstream from the TATA box) to form a strong ternary complex which is joined by BDP1; this ternary complex stimulates pol III transcription. Forms a trimeric complex composed of TBP, BRF2 and mini-SNAPc complex (SNAP43, SNAP50, and the N-terminal third of SNAP190) on the promoter. Assembly of the TBP-BRF2 complex is stimulated by SNAP190. Interacts with MAF1 and SNAPC4. Post-translationally, in response to oxidative stress, Cys-358 is reversibly oxidized to cysteine sulfenic acid. Oxidation of Cys-358 impairs formation of a ternary complex with TBP and DNA and down-regulates expression of target genes in response to oxidative stress.

It localises to the nucleus. Its function is as follows. General activator of RNA polymerase III transcription. Factor exclusively required for RNA polymerase III transcription of genes with promoter elements upstream of the initiation sites. Contributes to the regulation of gene expression; functions as activator in the absence of oxidative stress. Down-regulates expression of target genes in response to oxidative stress. Overexpression protects cells against apoptosis in response to oxidative stress. This Rattus norvegicus (Rat) protein is Transcription factor IIIB 50 kDa subunit (Brf2).